The following is a 92-amino-acid chain: Putative regulatory protein Tpet_0986 (92 aa).

This sequence belongs to the RemA family.

This is Putative regulatory protein Tpet_0986 from Thermotoga petrophila (strain ATCC BAA-488 / DSM 13995 / JCM 10881 / RKU-1).